Reading from the N-terminus, the 206-residue chain is Pyridoxine/pyridoxamine 5'-phosphate oxidase (206 aa).

FMN is bound by residues 54–59, 69–70, Arg75, Lys76, and Gln98; these read RVVLLK and YT. Residue Lys59 participates in substrate binding. 3 residues coordinate substrate: Tyr116, Arg120, and Ser124. FMN is bound by residues 133–134 and Trp178; that span reads QS. Residue 184–186 coordinates substrate; that stretch reads RLH. Arg188 lines the FMN pocket.

This sequence belongs to the pyridoxamine 5'-phosphate oxidase family. As to quaternary structure, homodimer. FMN is required as a cofactor.

It carries out the reaction pyridoxamine 5'-phosphate + O2 + H2O = pyridoxal 5'-phosphate + H2O2 + NH4(+). It catalyses the reaction pyridoxine 5'-phosphate + O2 = pyridoxal 5'-phosphate + H2O2. The protein operates within cofactor metabolism; pyridoxal 5'-phosphate salvage; pyridoxal 5'-phosphate from pyridoxamine 5'-phosphate: step 1/1. Its pathway is cofactor metabolism; pyridoxal 5'-phosphate salvage; pyridoxal 5'-phosphate from pyridoxine 5'-phosphate: step 1/1. Catalyzes the oxidation of either pyridoxine 5'-phosphate (PNP) or pyridoxamine 5'-phosphate (PMP) into pyridoxal 5'-phosphate (PLP). The chain is Pyridoxine/pyridoxamine 5'-phosphate oxidase from Anaplasma phagocytophilum (strain HZ).